Consider the following 130-residue polypeptide: Cytochrome b-c1 complex subunit 7 (130 aa).

The protein belongs to the UQCRB/QCR7 family. As to quaternary structure, component of the ubiquinol-cytochrome c oxidoreductase (cytochrome b-c1 complex, complex III, CIII), a multisubunit enzyme composed of 3 respiratory subunits cytochrome b, cytochrome c1 and Rieske protein, 2 core protein subunits, and additional low-molecular weight protein subunits. The complex exists as an obligatory dimer and forms supercomplexes (SCs) in the inner mitochondrial membrane with cytochrome c oxidase (complex IV, CIV).

It is found in the mitochondrion inner membrane. Functionally, component of the ubiquinol-cytochrome c oxidoreductase, a multisubunit transmembrane complex that is part of the mitochondrial electron transport chain which drives oxidative phosphorylation. The respiratory chain contains 3 multisubunit complexes succinate dehydrogenase (complex II, CII), ubiquinol-cytochrome c oxidoreductase (cytochrome b-c1 complex, complex III, CIII) and cytochrome c oxidase (complex IV, CIV), that cooperate to transfer electrons derived from NADH and succinate to molecular oxygen, creating an electrochemical gradient over the inner membrane that drives transmembrane transport and the ATP synthase. The cytochrome b-c1 complex catalyzes electron transfer from ubiquinol to cytochrome c, linking this redox reaction to translocation of protons across the mitochondrial inner membrane, with protons being carried across the membrane as hydrogens on the quinol. In the process called Q cycle, 2 protons are consumed from the matrix, 4 protons are released into the intermembrane space and 2 electrons are passed to cytochrome c. The protein is Cytochrome b-c1 complex subunit 7 of Schistosoma mansoni (Blood fluke).